Consider the following 649-residue polypeptide: Glycerol-3-phosphate dehydrogenase, mitochondrial (649 aa).

An FAD-binding site is contributed by 69–97; sequence DVLIIGGGATGTGCALDAATRGLNVALVE.

This sequence belongs to the FAD-dependent glycerol-3-phosphate dehydrogenase family. Requires FAD as cofactor.

The protein localises to the mitochondrion inner membrane. It localises to the mitochondrion intermembrane space. The enzyme catalyses a quinone + sn-glycerol 3-phosphate = dihydroxyacetone phosphate + a quinol. The protein operates within polyol metabolism; glycerol degradation via glycerol kinase pathway; glycerone phosphate from sn-glycerol 3-phosphate (anaerobic route): step 1/1. The sequence is that of Glycerol-3-phosphate dehydrogenase, mitochondrial (GUT2) from Saccharomyces cerevisiae (strain ATCC 204508 / S288c) (Baker's yeast).